The following is a 268-amino-acid chain: Adenosylcobinamide-GDP ribazoletransferase (268 aa).

Helical transmembrane passes span 54-74, 80-100, 124-144, 150-170, 202-222, and 243-263; these read IAGL…GVLW, AVVL…DGLS, IGVM…AFLA, WLTA…YGIV, ALAL…VWMV, and GALC…SAPM.

Belongs to the CobS family. Requires Mg(2+) as cofactor.

The protein resides in the cell membrane. The enzyme catalyses alpha-ribazole + adenosylcob(III)inamide-GDP = adenosylcob(III)alamin + GMP + H(+). It carries out the reaction alpha-ribazole 5'-phosphate + adenosylcob(III)inamide-GDP = adenosylcob(III)alamin 5'-phosphate + GMP + H(+). The protein operates within cofactor biosynthesis; adenosylcobalamin biosynthesis; adenosylcobalamin from cob(II)yrinate a,c-diamide: step 7/7. In terms of biological role, joins adenosylcobinamide-GDP and alpha-ribazole to generate adenosylcobalamin (Ado-cobalamin). Also synthesizes adenosylcobalamin 5'-phosphate from adenosylcobinamide-GDP and alpha-ribazole 5'-phosphate. This chain is Adenosylcobinamide-GDP ribazoletransferase, found in Roseiflexus sp. (strain RS-1).